The primary structure comprises 346 residues: Phosphoribosylformylglycinamidine cyclo-ligase (346 aa).

It belongs to the AIR synthase family.

Its subcellular location is the cytoplasm. It catalyses the reaction 2-formamido-N(1)-(5-O-phospho-beta-D-ribosyl)acetamidine + ATP = 5-amino-1-(5-phospho-beta-D-ribosyl)imidazole + ADP + phosphate + H(+). Its pathway is purine metabolism; IMP biosynthesis via de novo pathway; 5-amino-1-(5-phospho-D-ribosyl)imidazole from N(2)-formyl-N(1)-(5-phospho-D-ribosyl)glycinamide: step 2/2. This chain is Phosphoribosylformylglycinamidine cyclo-ligase, found in Bacillus cereus (strain G9842).